The chain runs to 60 residues: UPF0434 protein YcaR (60 aa).

The protein belongs to the UPF0434 family.

The sequence is that of UPF0434 protein YcaR from Salmonella arizonae (strain ATCC BAA-731 / CDC346-86 / RSK2980).